The primary structure comprises 389 residues: MNNSKGWILSLSINAFCVFGASGIYLDKLVNKWFGYEVLDLANSDNALVTGLATSSGILLYSSWASVMQESFHFLEKISMFDTFLVRVFQFCAFFFGGIVFYIFNHFLHKWLHESSQTGFLHDHFSVSDPSPSTAQNHRSPPASCKRLSSCESSGSPSSRVVGSLQGSYCPSGTHLHEGSLLLEDSSARHSSDSVHEYLVKKPSNCDCECHAHFSSFPTHSGTPDDIEHIHSVYTMGIQTALLICLHKVPEGFITFLASTVDTGFMVLVAMSIHNIVEGFTIAYPLYLAWKSRPKAFLTAATLSSCSLPLGSLIAFLVMEAGGIGSSDFLNFLYGIIFAGTAGMMLILSLRVILPEALRHDHSENKRHSFICFTIGILFTLFLEIFDSH.

7 consecutive transmembrane segments (helical) span residues 6-26, 48-68, 88-108, 267-289, 305-325, 329-349, and 368-388; these read GWIL…GIYL, LVTG…ASVM, VFQF…NHFL, VLVA…LYLA, SCSL…GGIG, FLNF…LILS, and HSFI…IFDS.

The protein belongs to the ZIP transporter (TC 2.A.5) family.

It localises to the endoplasmic reticulum membrane. Its function is as follows. Probable zinc transporter that may mediate zinc remobilization from the endoplasmic reticulum under zinc limitation. This Schizosaccharomyces pombe (strain 972 / ATCC 24843) (Fission yeast) protein is Probable zinc transporter zip2 (zip2).